The primary structure comprises 267 residues: B3 domain-containing protein At3g11580 (267 aa).

A DNA-binding region (TF-B3) is located at residues 29-143 (FEKSLTPSDV…RLFIGWRRRG (115 aa)).

The protein resides in the nucleus. The protein is B3 domain-containing protein At3g11580 (ARF32) of Arabidopsis thaliana (Mouse-ear cress).